A 365-amino-acid polypeptide reads, in one-letter code: Putrescine carbamoyltransferase (365 aa).

Carbamoyl phosphate is bound by residues 54–58 (STRTR), Arg105, and His132. A putrescine-binding site is contributed by 277-280 (HCLP).

The protein belongs to the aspartate/ornithine carbamoyltransferase superfamily. PTCase family. As to quaternary structure, homotrimer.

It localises to the cytoplasm. It catalyses the reaction carbamoyl phosphate + putrescine = N-carbamoylputrescine + phosphate + H(+). It participates in amine and polyamine biosynthesis; putrescine biosynthesis via agmatine pathway; putrescine from N-carbamoylputrescine (transferase route): step 1/1. Catalyzes the phosphorolysis of N-carbamoylputrescine to form carbamoyl phosphate and putrescine. Is involved in the degradation pathway of the polyamine agmatine. The protein is Putrescine carbamoyltransferase of Mycoplasma capricolum subsp. capricolum (strain California kid / ATCC 27343 / NCTC 10154).